We begin with the raw amino-acid sequence, 317 residues long: Melanocyte-stimulating hormone receptor (317 aa).

The Extracellular segment spans residues 1–37 (MPVQGSQRRLLGSLNSTPTATPHLGLAANQTGARCRE). N-linked (GlcNAc...) asparagine glycosylation occurs at Asn-29. The helical transmembrane segment at 38-63 (VSIPDGLFLSLGLVSLVENVLVVTAI) threads the bilayer. Topologically, residues 64–72 (AKNRNLHSP) are cytoplasmic. The chain crosses the membrane as a helical span at residues 73–93 (MYCFICCLALSDLLVSGSNML). Residues 94–118 (ETAVTLLLEAGALVARAAVVQQLDN) are Extracellular-facing. A helical transmembrane segment spans residues 119-140 (VIDVITCSSMLSSLCFLGAIAV). The Cytoplasmic segment spans residues 141–163 (DRYISIFYALRYHSIVTLPRAQR). Residues 164 to 183 (AIAAIWVASVLCSTLFIAYY) traverse the membrane as a helical segment. Residues 184 to 191 (DHAAVLLC) lie on the Extracellular side of the membrane. Residues 192-211 (LVVFFLAMLVLMAVLYVHML) form a helical membrane-spanning segment. Topologically, residues 212-240 (ARACQHAQGIARLHKRQRLAHQGFGLKGA) are cytoplasmic. Residues 241–266 (ATLTILLGIFFLCWGPFFLHLTLIVL) form a helical membrane-spanning segment. The Extracellular segment spans residues 267-279 (CPQHPTCSCIFKN). A helical membrane pass occupies residues 280-300 (FNLFLALIICNAIIDPLIYAF). The Cytoplasmic portion of the chain corresponds to 301–317 (RSQELRRTLKEVLLCSW). The S-palmitoyl cysteine moiety is linked to residue Cys-315.

It belongs to the G-protein coupled receptor 1 family. Interacts with MGRN1, but does not undergo MGRN1-mediated ubiquitination; this interaction competes with GNAS-binding and thus inhibits agonist-induced cAMP production. Interacts with OPN3; the interaction results in a decrease in MC1R-mediated cAMP signaling and ultimately a decrease in melanin production in melanocytes. In terms of tissue distribution, expressed in the adrenal gland.

The protein localises to the cell membrane. Functionally, receptor for MSH (alpha, beta and gamma) and ACTH. The activity of this receptor is mediated by G proteins which activate adenylate cyclase. Mediates melanogenesis, the production of eumelanin (black/brown) and phaeomelanin (red/yellow), via regulation of cAMP signaling in melanocytes. In Macaca mulatta (Rhesus macaque), this protein is Melanocyte-stimulating hormone receptor (MC1R).